The primary structure comprises 151 residues: UPF0735 ACT domain-containing protein SH1278 (151 aa).

The region spanning 74 to 149 is the ACT domain; the sequence is TLILYVNDIV…HVSKVELISM (76 aa).

It belongs to the UPF0735 family.

In Staphylococcus haemolyticus (strain JCSC1435), this protein is UPF0735 ACT domain-containing protein SH1278.